The primary structure comprises 88 residues: MSSGGLLLLLGLLTLWEVLTPVSSKDRPKFCHLPPKPGPCRAAIPRFYYNPHSKQCEKFIYGGCHGNANSFKTPDECNYTCLGVSLPK.

Residues 1-24 form the signal peptide; it reads MSSGGLLLLLGLLTLWEVLTPVSS. Positions 31–81 constitute a BPTI/Kunitz inhibitor domain; sequence CHLPPKPGPCRAAIPRFYYNPHSKQCEKFIYGGCHGNANSFKTPDECNYTC. 3 disulfides stabilise this stretch: cysteine 31-cysteine 81, cysteine 40-cysteine 64, and cysteine 56-cysteine 77. Positions 87 to 88 are excised as a propeptide; sequence PK.

This sequence belongs to the venom Kunitz-type family. Heterotrimer composed of an alpha-neurotoxin-like peptide of 8 kDa (AC P0CJ35), a neurotoxic phospholipase of 16 kDa (AC Q7LZG2) and this serine protease inhibitor of 7 kDa at an approximate stoichiometry of 1:1:4; non-covalently linked. Expressed by the venom gland.

The protein resides in the secreted. Functionally, heterotrimer: blocks the voltage-dependent L-type calcium channels (Cav) from the heart, and the small conductance calcium-activated potassium channels (KCa) in the chromaffin cells and in the brain. Is very toxic to mice. Its function is as follows. Monomer: serine protease inhibitor that inhibits plasma kallikrein (Ki=0.057 nM), tissue kallikrein (Ki=0.23 nM), trypsin (Ki=0.31 nM), plasmin (Ki=6.1 nM), elastase (Ki=201 nM), factor Xa (Ki=871 nM), alpha-factor XIIa (Ki=2380 nM). Does not inhibit APC, urokinase-type plasminogen activator (uPA/PLAU), tissue plasminogen activator (tPA/PLAT), thrombin and factor VIIa. In addition, the monomer inhibits fibrinolysis in whole blood and prolonged the intrinsec clotting time. The protein is Kunitz-type serine protease inhibitor taicotoxin of Oxyuranus scutellatus scutellatus (Australian taipan).